We begin with the raw amino-acid sequence, 256 residues long: YVLIMRLKLKRKIYRADFSEYKGLWSLYNRATDNLYSHLQRALEKYENFGVSAKHKVLQCLVHVVTSQSDNSVRYVYGNIFALVRLGTYVTVWYCYTESAPDFISVDPHYLDIELIIDLFKVRKLFVWIPYEEVISTSILEAYDAVVERTALTDCLDRKLREEELSDKFEFWGKCSDGDHTIDSVEENATIEYASSKEGSACKEGVDSSCKEEGGGCEEEGSGSEEDSDDSDNPRYLAFGVVVLVGVLLYVWYCSR.

Residues 201-214 show a composition bias toward basic and acidic residues; the sequence is ACKEGVDSSCKEEG. The segment at 201 to 231 is disordered; the sequence is ACKEGVDSSCKEEGGGCEEEGSGSEEDSDDS. Residues 215–231 are compositionally biased toward acidic residues; that stretch reads GGCEEEGSGSEEDSDDS.

The protein localises to the mitochondrion. This is an uncharacterized protein from Zea mays (Maize).